Here is a 187-residue protein sequence, read N- to C-terminus: Protein GrpE (187 aa).

Positions 1-23 are disordered; it reads MNNEKELKKEETSVENKEKKVAT.

It belongs to the GrpE family. As to quaternary structure, homodimer.

The protein resides in the cytoplasm. Participates actively in the response to hyperosmotic and heat shock by preventing the aggregation of stress-denatured proteins, in association with DnaK and GrpE. It is the nucleotide exchange factor for DnaK and may function as a thermosensor. Unfolded proteins bind initially to DnaJ; upon interaction with the DnaJ-bound protein, DnaK hydrolyzes its bound ATP, resulting in the formation of a stable complex. GrpE releases ADP from DnaK; ATP binding to DnaK triggers the release of the substrate protein, thus completing the reaction cycle. Several rounds of ATP-dependent interactions between DnaJ, DnaK and GrpE are required for fully efficient folding. The protein is Protein GrpE of Mesoplasma florum (strain ATCC 33453 / NBRC 100688 / NCTC 11704 / L1) (Acholeplasma florum).